We begin with the raw amino-acid sequence, 594 residues long: Sucrose transport protein SUC3 (594 aa).

N-acetylserine is present on Ser-2. The Cytoplasmic portion of the chain corresponds to 2–58; it reads SDSVSISVPYRNLRKEIELETVTKHRQNESGSSSFSESASPSNHSDSADGESVSKNC. Positions 23-50 are disordered; that stretch reads VTKHRQNESGSSSFSESASPSNHSDSAD. Residues 31 to 46 show a composition bias toward low complexity; that stretch reads SGSSSFSESASPSNHS. A helical transmembrane segment spans residues 59–79; sequence SLVTLVLSCTVAAGVQFGWAL. The Extracellular portion of the chain corresponds to 80-98; it reads QLSLLTPYIQTLGISHAFS. A helical transmembrane segment spans residues 99–119; that stretch reads SFIWLCGPITGLVVQPFVGIW. Residues 120–131 are Cytoplasmic-facing; the sequence is SDKCTSKYGRRR. The chain crosses the membrane as a helical span at residues 132 to 152; sequence PFILVGSFMISIAVIIIGFSA. Residues 153–174 lie on the Extracellular side of the membrane; sequence DIGYLLGDSKEHCSTFKGTRTR. A helical transmembrane segment spans residues 175-195; the sequence is AAVVFIIGFWLLDLANNTVQG. Residues 196–214 are Cytoplasmic-facing; that stretch reads PARALLADLSGPDQRNTAN. The helical transmembrane segment at 215-235 threads the bilayer; the sequence is AVFCLWMAIGNILGFSAGASG. Residues 236-257 lie on the Extracellular side of the membrane; the sequence is KWQEWFPFLTSRACCAACGNLK. The chain crosses the membrane as a helical span at residues 258–278; sequence AAFLLAVVFLTICTLVTIYFA. Residues 279-365 are Cytoplasmic-facing; that stretch reads KEIPFTSNKP…LTSLRHLPPA (87 aa). Residues 366–386 traverse the membrane as a helical segment; it reads MHSVLIVMALTWLSWFPFFLF. The Extracellular portion of the chain corresponds to 387–417; that stretch reads DTDWMGREVYHGDPTGDSLHMELYDQGVREG. The helical transmembrane segment at 418–438 threads the bilayer; it reads ALGLLLNSVVLGISSFLIEPM. Residues 439-445 lie on the Cytoplasmic side of the membrane; that stretch reads CQRMGAR. Residues 446-466 traverse the membrane as a helical segment; the sequence is VVWALSNFTVFACMAGTAVIS. The Extracellular segment spans residues 467 to 489; that stretch reads LMSLSDDKNGIEYIMRGNETTRT. N-linked (GlcNAc...) asparagine glycosylation occurs at Asn-484. Residues 490 to 510 traverse the membrane as a helical segment; that stretch reads AAVIVFALLGFPLAITYSVPF. Residues 511-525 are Cytoplasmic-facing; the sequence is SVTAEVTADSGGGQG. Residues 526-546 form a helical membrane-spanning segment; sequence LAIGVLNLAIVIPQMIVSLGA. At 547 to 555 the chain is on the extracellular side; sequence GPWDQLFGG. The chain crosses the membrane as a helical span at residues 556-576; sequence GNLPAFVLASVAAFAAGVIAL. At 577–594 the chain is on the cytoplasmic side; sequence QRLPTLSSSFKSTGFHIG.

Belongs to the glycoside-pentoside-hexuronide (GPH) cation symporter transporter (TC 2.A.2.4) family. Homodimer. Interacts with SUC2 and SUC4. In terms of tissue distribution, mostly localized in parenchymatic cells next to vascular tissues (at protein level). Present in stipules, trichomes, hydathodes and guard cells of source leaves, as well as in lateral root tips and flowers.

Its subcellular location is the cell membrane. It catalyses the reaction sucrose(out) + H(+)(out) = sucrose(in) + H(+)(in). The protein operates within glycan biosynthesis; sucrose metabolism. Inhibited by protonophores (e.g. dinitrophenol and carbonyl cyanide m-chlorophenyl-hydrazone (CCCP)) and SH group inhibitors (e.g. p-chloromercuribenzene sulphonic acid (PCMBS)). Functionally, responsible for the transport of sucrose into the cell, with the concomitant uptake of protons (symport system). Can also transport maltose at a lesser rate. May also transport biotin. Probably involved in carpel maturation that leads to pod shatter and seed dispersal. This Arabidopsis thaliana (Mouse-ear cress) protein is Sucrose transport protein SUC3.